The chain runs to 159 residues: Major latex protein 149 (159 aa).

The protein belongs to the MLP family. In terms of tissue distribution, laticifer.

Its subcellular location is the vacuole. It is found in the cytoplasmic vesicle. In terms of biological role, not known; MLPs constitute up to 50% of the soluble latex protein. In Papaver somniferum (Opium poppy), this protein is Major latex protein 149 (MLP149).